We begin with the raw amino-acid sequence, 555 residues long: Pyrophosphate--fructose 6-phosphate 1-phosphotransferase (555 aa).

Glycine 82 is a binding site for diphosphate. Arginine 146 contributes to the substrate binding site. Aspartate 176 lines the Mg(2+) pocket. Residues threonine 204 to aspartate 206, lysine 243 to tyrosine 244, methionine 251 to arginine 253, glutamate 312, and tyrosine 428 to arginine 431 contribute to the substrate site. Aspartate 206 serves as the catalytic Proton acceptor.

This sequence belongs to the phosphofructokinase type A (PFKA) family. PPi-dependent PFK group II subfamily. Clade 'Long' sub-subfamily. In terms of assembly, homodimer. Requires Mg(2+) as cofactor.

It localises to the cytoplasm. The enzyme catalyses beta-D-fructose 6-phosphate + diphosphate = beta-D-fructose 1,6-bisphosphate + phosphate + H(+). Its pathway is carbohydrate degradation; glycolysis; D-glyceraldehyde 3-phosphate and glycerone phosphate from D-glucose: step 3/4. Its activity is regulated as follows. Non-allosteric. Its function is as follows. Catalyzes the phosphorylation of D-fructose 6-phosphate, the first committing step of glycolysis. Uses inorganic phosphate (PPi) as phosphoryl donor instead of ATP like common ATP-dependent phosphofructokinases (ATP-PFKs), which renders the reaction reversible, and can thus function both in glycolysis and gluconeogenesis. Consistently, PPi-PFK can replace the enzymes of both the forward (ATP-PFK) and reverse (fructose-bisphosphatase (FBPase)) reactions. The polypeptide is Pyrophosphate--fructose 6-phosphate 1-phosphotransferase (Borreliella burgdorferi (strain ATCC 35210 / DSM 4680 / CIP 102532 / B31) (Borrelia burgdorferi)).